The following is a 259-amino-acid chain: Protein N-terminal and lysine N-methyltransferase efm7 (259 aa).

Residues tryptophan 56, 83–85 (GAA), aspartate 105, tryptophan 139, and alanine 163 contribute to the S-adenosyl-L-methionine site.

This sequence belongs to the class I-like SAM-binding methyltransferase superfamily. EFM7 family.

The protein resides in the cytoplasm. Its function is as follows. S-adenosyl-L-methionine-dependent protein methyltransferase that trimethylates the N-terminal glycine 'Gly-2' of elongation factor 1-alpha, before also catalyzing the mono- and dimethylation of 'Lys-3'. The chain is Protein N-terminal and lysine N-methyltransferase efm7 from Aspergillus fumigatus (strain ATCC MYA-4609 / CBS 101355 / FGSC A1100 / Af293) (Neosartorya fumigata).